The following is a 558-amino-acid chain: 2-isopropylmalate synthase (558 aa).

The Pyruvate carboxyltransferase domain maps to 30 to 303; that stretch reads PIWCSVDLRD…DPELDCRDIE (274 aa). Mg(2+) contacts are provided by Asp39, His242, His244, and Asn278. A regulatory domain region spans residues 437–558; sequence QPNARIKFVD…ANRVLEERAK (122 aa).

This sequence belongs to the alpha-IPM synthase/homocitrate synthase family. LeuA type 2 subfamily. In terms of assembly, homodimer. Mg(2+) serves as cofactor.

It is found in the cytoplasm. The catalysed reaction is 3-methyl-2-oxobutanoate + acetyl-CoA + H2O = (2S)-2-isopropylmalate + CoA + H(+). It participates in amino-acid biosynthesis; L-leucine biosynthesis; L-leucine from 3-methyl-2-oxobutanoate: step 1/4. In terms of biological role, catalyzes the condensation of the acetyl group of acetyl-CoA with 3-methyl-2-oxobutanoate (2-ketoisovalerate) to form 3-carboxy-3-hydroxy-4-methylpentanoate (2-isopropylmalate). In Agrobacterium fabrum (strain C58 / ATCC 33970) (Agrobacterium tumefaciens (strain C58)), this protein is 2-isopropylmalate synthase.